The chain runs to 182 residues: PRKR-interacting protein 1 homolog (182 aa).

Composition is skewed to basic and acidic residues over residues 1–18 (MAVE…KKES), 27–43 (PAEE…RNPD), and 114–124 (IENQKAAEDRT). 2 disordered regions span residues 1–80 (MAVE…GEFH) and 114–182 (IENQ…MGKR). The required for RNA-binding stretch occupies residues 51 to 143 (KPKEWNPRAP…LKQKKLMAKK (93 aa)). The stretch at 99-157 (LSEKQKLDEEYKEKLIENQKAAEDRTAKRRKKREKLKQKKLMAKKAKMESQKEEDSEKS) forms a coiled coil. Residues 125-143 (AKRRKKREKLKQKKLMAKK) are compositionally biased toward basic residues. A required for nuclear localization region spans residues 126–138 (KRRKKREKLKQKK). Over residues 144–156 (AKMESQKEEDSEK) the composition is skewed to basic and acidic residues. Residues 164-173 (EGEEKDDDAE) are compositionally biased toward acidic residues.

The protein belongs to the PRKRIP1 family. As to quaternary structure, component of the pre-catalytic and post-catalytic spliceosome complexes.

The protein localises to the nucleus. It is found in the nucleolus. Required for pre-mRNA splicing as component of the spliceosome. Binds double-stranded RNA. The polypeptide is PRKR-interacting protein 1 homolog (prkrip1) (Danio rerio (Zebrafish)).